The primary structure comprises 292 residues: Keratin-associated protein 10-9 (292 aa).

25 repeat units span residues Cys-26 to Pro-30, Cys-31 to Ser-35, Cys-36 to Ala-40, Cys-57 to Thr-61, Cys-79 to Ser-83, Cys-99 to Val-103, Cys-104 to Val-108, Cys-109 to Val-113, Cys-114 to Ser-118, Cys-120 to Ser-124, Cys-130 to Ser-134, Cys-140 to Val-144, Cys-145 to Val-149, Cys-150 to Thr-154, Cys-162 to Ser-166, Cys-172 to Ser-176, Tyr-182 to Val-186, Cys-187 to Val-191, Cys-192 to Ile-196, Cys-197 to Val-201, Cys-209 to Ser-213, Cys-219 to Ser-223, Cys-224 to Ser-228, Cys-243 to Val-247, and Cys-250 to Thr-254. Residues Cys-26–Thr-254 are 25 X 5 AA repeats of C-C-X(3).

This sequence belongs to the KRTAP type 10 family. As to quaternary structure, interacts with hair keratins. Restricted to a narrow region of the hair fiber cuticle, lying approximately 20 cell layers above the apex of the dermal papilla of the hair root; not detected in any other tissues.

In the hair cortex, hair keratin intermediate filaments are embedded in an interfilamentous matrix, consisting of hair keratin-associated proteins (KRTAP), which are essential for the formation of a rigid and resistant hair shaft through their extensive disulfide bond cross-linking with abundant cysteine residues of hair keratins. The matrix proteins include the high-sulfur and high-glycine-tyrosine keratins. This chain is Keratin-associated protein 10-9 (KRTAP10-9), found in Homo sapiens (Human).